A 579-amino-acid chain; its full sequence is Glycine--tRNA ligase (579 aa).

Position 175 (Glu-175) interacts with glycine. ATP is bound by residues 207-209 (RNE) and 218-219 (RV). A glycine-binding site is contributed by Glu-226. 327–328 (EC) provides a ligand contact to ATP. 442 to 444 (EPS) is a glycine binding site. Position 449 (Arg-449) interacts with ATP.

This sequence belongs to the class-II aminoacyl-tRNA synthetase family. Homodimer.

It catalyses the reaction tRNA(Gly) + glycine + ATP = glycyl-tRNA(Gly) + AMP + diphosphate. The catalysed reaction is 2 ATP + H(+) = P(1),P(4)-bis(5'-adenosyl) tetraphosphate + diphosphate. Its function is as follows. Catalyzes the ATP-dependent ligation of glycine to the 3'-end of its cognate tRNA, via the formation of an aminoacyl-adenylate intermediate (Gly-AMP). Also produces diadenosine tetraphosphate (Ap4A), a universal pleiotropic signaling molecule needed for cell regulation pathways, by direct condensation of 2 ATPs. Thereby, may play a special role in Ap4A homeostasis. The polypeptide is Glycine--tRNA ligase (Encephalitozoon cuniculi (strain GB-M1) (Microsporidian parasite)).